The primary structure comprises 370 residues: D-alanine--D-alanine ligase (370 aa).

Residues 144 to 352 form the ATP-grasp domain; the sequence is KKIFADAGIP…YSALIERLVD (209 aa). Residue 177–232 participates in ATP binding; that stretch reads EEVLTYPVFVKPANLGSSVGISKATNKKELEDAMTEAFLYDRRVVVEQGVVAREIE. Residues aspartate 306, glutamate 319, and asparagine 321 each contribute to the Mg(2+) site.

This sequence belongs to the D-alanine--D-alanine ligase family. The cofactor is Mg(2+). It depends on Mn(2+) as a cofactor.

Its subcellular location is the cytoplasm. The enzyme catalyses 2 D-alanine + ATP = D-alanyl-D-alanine + ADP + phosphate + H(+). Its pathway is cell wall biogenesis; peptidoglycan biosynthesis. Functionally, cell wall formation. The sequence is that of D-alanine--D-alanine ligase from Listeria welshimeri serovar 6b (strain ATCC 35897 / DSM 20650 / CCUG 15529 / CIP 8149 / NCTC 11857 / SLCC 5334 / V8).